The following is a 110-amino-acid chain: Large ribosomal subunit protein uL22 (110 aa).

The protein belongs to the universal ribosomal protein uL22 family. Part of the 50S ribosomal subunit.

Its function is as follows. This protein binds specifically to 23S rRNA; its binding is stimulated by other ribosomal proteins, e.g. L4, L17, and L20. It is important during the early stages of 50S assembly. It makes multiple contacts with different domains of the 23S rRNA in the assembled 50S subunit and ribosome. In terms of biological role, the globular domain of the protein is located near the polypeptide exit tunnel on the outside of the subunit, while an extended beta-hairpin is found that lines the wall of the exit tunnel in the center of the 70S ribosome. The protein is Large ribosomal subunit protein uL22 of Pasteurella multocida (strain Pm70).